The following is a 288-amino-acid chain: Bifunctional protein FolD (288 aa).

NADP(+) contacts are provided by residues 166–168, Ser-191, and Ile-232; that span reads GRS.

This sequence belongs to the tetrahydrofolate dehydrogenase/cyclohydrolase family. As to quaternary structure, homodimer.

It carries out the reaction (6R)-5,10-methylene-5,6,7,8-tetrahydrofolate + NADP(+) = (6R)-5,10-methenyltetrahydrofolate + NADPH. The enzyme catalyses (6R)-5,10-methenyltetrahydrofolate + H2O = (6R)-10-formyltetrahydrofolate + H(+). Its pathway is one-carbon metabolism; tetrahydrofolate interconversion. Functionally, catalyzes the oxidation of 5,10-methylenetetrahydrofolate to 5,10-methenyltetrahydrofolate and then the hydrolysis of 5,10-methenyltetrahydrofolate to 10-formyltetrahydrofolate. The sequence is that of Bifunctional protein FolD from Rickettsia peacockii (strain Rustic).